The chain runs to 189 residues: dTTP/UTP pyrophosphatase (189 aa).

Asp-64 serves as the catalytic Proton acceptor.

The protein belongs to the Maf family. YhdE subfamily. It depends on a divalent metal cation as a cofactor.

The protein resides in the cytoplasm. It carries out the reaction dTTP + H2O = dTMP + diphosphate + H(+). It catalyses the reaction UTP + H2O = UMP + diphosphate + H(+). Functionally, nucleoside triphosphate pyrophosphatase that hydrolyzes dTTP and UTP. May have a dual role in cell division arrest and in preventing the incorporation of modified nucleotides into cellular nucleic acids. The polypeptide is dTTP/UTP pyrophosphatase (Syntrophomonas wolfei subsp. wolfei (strain DSM 2245B / Goettingen)).